We begin with the raw amino-acid sequence, 347 residues long: NADH-ubiquinone oxidoreductase chain 2 (347 aa).

11 helical membrane passes run 1–21 (MNPM…SIVM), 25–45 (HWFL…PVLM), 60–80 (FLTQ…NLMF), 96–116 (MLLT…FWVP), 127–147 (GLIL…QIYP), 149–169 (INTN…GWGG), 178–198 (IMAY…IYNP), 202–222 (LLNL…LIFA), 239–259 (IITI…PLTG), 274–294 (NSVI…FFYM), and 326–346 (MMPL…FILL).

The protein belongs to the complex I subunit 2 family. As to quaternary structure, core subunit of respiratory chain NADH dehydrogenase (Complex I) which is composed of 45 different subunits. Interacts with TMEM242.

It localises to the mitochondrion inner membrane. The enzyme catalyses a ubiquinone + NADH + 5 H(+)(in) = a ubiquinol + NAD(+) + 4 H(+)(out). In terms of biological role, core subunit of the mitochondrial membrane respiratory chain NADH dehydrogenase (Complex I) that is believed to belong to the minimal assembly required for catalysis. Complex I functions in the transfer of electrons from NADH to the respiratory chain. The immediate electron acceptor for the enzyme is believed to be ubiquinone. This Suncus etruscus (Etruscan shrew) protein is NADH-ubiquinone oxidoreductase chain 2.